The primary structure comprises 227 residues: UPF0758 protein Spro_4842 (227 aa).

In terms of domain architecture, MPN spans 105–227 (AMLNPRMTQH…CVSFAERGWL (123 aa)). Zn(2+)-binding residues include His176, His178, and Asp189. Positions 176–189 (HNHPSGKAEPSHAD) match the JAMM motif motif.

Belongs to the UPF0758 family. YicR subfamily.

The polypeptide is UPF0758 protein Spro_4842 (Serratia proteamaculans (strain 568)).